A 195-amino-acid polypeptide reads, in one-letter code: Peroxiredoxin (195 aa).

A Thioredoxin domain is found at 4–162 (AMIGKPAPEF…TLRLVQAFQF (159 aa)). C49 acts as the Cysteine sulfenic acid (-SOH) intermediate in catalysis.

This sequence belongs to the peroxiredoxin family. AhpC/Prx1 subfamily. In terms of assembly, homodimer; disulfide-linked, upon oxidation.

It catalyses the reaction a hydroperoxide + [thioredoxin]-dithiol = an alcohol + [thioredoxin]-disulfide + H2O. Its function is as follows. Thiol-specific peroxidase that catalyzes the reduction of hydrogen peroxide and organic hydroperoxides to water and alcohols, respectively. Plays a role in cell protection against oxidative stress by detoxifying peroxides and as sensor of hydrogen peroxide-mediated signaling events. The protein is Peroxiredoxin of Ascaris suum (Pig roundworm).